Reading from the N-terminus, the 698-residue chain is Voltage-dependent calcium channel beta subunit-associated regulatory protein (698 aa).

Topologically, residues 1–41 (MQPTATMATAAATTATVALTTSWDNATSRPTAEPDPILDNY) are extracellular. Asn-25 is a glycosylation site (N-linked (GlcNAc...) asparagine). A helical; Signal-anchor for type III membrane protein transmembrane segment spans residues 42-62 (VLLVVVMSLFVGGTLVVLSGV). The Cytoplasmic portion of the chain corresponds to 63–698 (LLLCKRCWEV…APTSPDHSPA (636 aa)). 2 disordered regions span residues 90–124 (YLDN…TSST) and 185–275 (ASAA…SSGS). The segment covering 185 to 197 (ASAAATPHPATTS) has biased composition (low complexity). Residues Ser-290 and Ser-295 each carry the phosphoserine modification. Disordered regions lie at residues 308-339 (SQRA…EQEG), 360-421 (PPPR…HAQC), 438-536 (ATAS…RRDY), and 554-648 (PHFD…GSGL). Positions 360–375 (PPPRPFLASPTSPPPT) are enriched in pro residues. The span at 402–413 (PEHAQQQDPQQE) shows a compositional bias: low complexity. A compositionally biased stretch (gly residues) spans 459 to 468 (SGSGSGGGGA). The span at 471–482 (AFPPPPESPPAL) shows a compositional bias: pro residues. Over residues 483–493 (RPKDGEARRLL) the composition is skewed to basic and acidic residues. 3 positions are modified to phosphoserine: Ser-501, Ser-520, and Ser-524. Basic residues predominate over residues 562 to 576 (HRTRAHPHTHARKQW). Ser-610 is modified (phosphoserine). At Thr-691 the chain carries Phosphothreonine. Phosphoserine is present on residues Ser-692 and Ser-696.

As to quaternary structure, interacts with voltage-dependent calcium channels CACNB1, CACNB2, CACNB3 and CACNB4 beta subunits; prevents their interaction with the CACNA1C alpha subunit thereby negatively regulating the activity of the corresponding calcium channels. In terms of tissue distribution, expressed by neurons in the cortex, cerebellum and hippocampus and by pancreatic beta cells (at protein level).

It is found in the cytoplasmic vesicle. Its subcellular location is the secretory vesicle. The protein localises to the synaptic vesicle membrane. The protein resides in the cell membrane. It localises to the cell projection. It is found in the growth cone. Negatively regulates voltage-gated calcium channels by preventing the interaction between their alpha and beta subunits. Thereby, negatively regulates calcium channels activity at the plasma membrane and indirectly inhibits calcium-regulated exocytosis. The sequence is that of Voltage-dependent calcium channel beta subunit-associated regulatory protein from Mus musculus (Mouse).